The chain runs to 703 residues: Elongation factor G (703 aa).

The region spanning 7-287 (KFTRNIGIAA…AVMRYLPSPA (281 aa)) is the tr-type G domain. GTP-binding positions include 16 to 23 (AHIDAGKT), 84 to 88 (DTPGH), and 138 to 141 (NKMD).

The protein belongs to the TRAFAC class translation factor GTPase superfamily. Classic translation factor GTPase family. EF-G/EF-2 subfamily.

It is found in the cytoplasm. Its function is as follows. Catalyzes the GTP-dependent ribosomal translocation step during translation elongation. During this step, the ribosome changes from the pre-translocational (PRE) to the post-translocational (POST) state as the newly formed A-site-bound peptidyl-tRNA and P-site-bound deacylated tRNA move to the P and E sites, respectively. Catalyzes the coordinated movement of the two tRNA molecules, the mRNA and conformational changes in the ribosome. The protein is Elongation factor G of Christiangramia forsetii (strain DSM 17595 / CGMCC 1.15422 / KT0803) (Gramella forsetii).